The chain runs to 284 residues: 4-diphosphocytidyl-2-C-methyl-D-erythritol kinase (284 aa).

The active site involves Lys-10. 92 to 102 (PYGAGLGSGSS) provides a ligand contact to ATP. Asp-134 is a catalytic residue.

It belongs to the GHMP kinase family. IspE subfamily.

It catalyses the reaction 4-CDP-2-C-methyl-D-erythritol + ATP = 4-CDP-2-C-methyl-D-erythritol 2-phosphate + ADP + H(+). Its pathway is isoprenoid biosynthesis; isopentenyl diphosphate biosynthesis via DXP pathway; isopentenyl diphosphate from 1-deoxy-D-xylulose 5-phosphate: step 3/6. In terms of biological role, catalyzes the phosphorylation of the position 2 hydroxy group of 4-diphosphocytidyl-2C-methyl-D-erythritol. The polypeptide is 4-diphosphocytidyl-2-C-methyl-D-erythritol kinase (Salinibacter ruber (strain DSM 13855 / M31)).